A 410-amino-acid polypeptide reads, in one-letter code: 3-phosphoshikimate 1-carboxyvinyltransferase (410 aa).

Positions 21, 22, and 26 each coordinate 3-phosphoshikimate. Phosphoenolpyruvate is bound at residue lysine 21. Phosphoenolpyruvate-binding residues include glycine 69 and arginine 97. 3-phosphoshikimate contacts are provided by serine 143, serine 144, glutamine 145, serine 171, aspartate 288, and lysine 315. Residue glutamine 145 coordinates phosphoenolpyruvate. Aspartate 288 (proton acceptor) is an active-site residue. 3 residues coordinate phosphoenolpyruvate: arginine 319, arginine 364, and lysine 389.

Belongs to the EPSP synthase family. As to quaternary structure, monomer.

The protein resides in the cytoplasm. It catalyses the reaction 3-phosphoshikimate + phosphoenolpyruvate = 5-O-(1-carboxyvinyl)-3-phosphoshikimate + phosphate. The protein operates within metabolic intermediate biosynthesis; chorismate biosynthesis; chorismate from D-erythrose 4-phosphate and phosphoenolpyruvate: step 6/7. Functionally, catalyzes the transfer of the enolpyruvyl moiety of phosphoenolpyruvate (PEP) to the 5-hydroxyl of shikimate-3-phosphate (S3P) to produce enolpyruvyl shikimate-3-phosphate and inorganic phosphate. The polypeptide is 3-phosphoshikimate 1-carboxyvinyltransferase (Bacteroides fragilis (strain ATCC 25285 / DSM 2151 / CCUG 4856 / JCM 11019 / LMG 10263 / NCTC 9343 / Onslow / VPI 2553 / EN-2)).